The sequence spans 202 residues: NADH-quinone oxidoreductase subunit C (202 aa).

Belongs to the complex I 30 kDa subunit family. As to quaternary structure, NDH-1 is composed of 14 different subunits. Subunits NuoB, C, D, E, F, and G constitute the peripheral sector of the complex.

Its subcellular location is the cell inner membrane. It carries out the reaction a quinone + NADH + 5 H(+)(in) = a quinol + NAD(+) + 4 H(+)(out). Its function is as follows. NDH-1 shuttles electrons from NADH, via FMN and iron-sulfur (Fe-S) centers, to quinones in the respiratory chain. The immediate electron acceptor for the enzyme in this species is believed to be ubiquinone. Couples the redox reaction to proton translocation (for every two electrons transferred, four hydrogen ions are translocated across the cytoplasmic membrane), and thus conserves the redox energy in a proton gradient. This chain is NADH-quinone oxidoreductase subunit C, found in Bartonella quintana (strain Toulouse) (Rochalimaea quintana).